A 141-amino-acid polypeptide reads, in one-letter code: Hemoglobin subunit alpha-D (141 aa).

The 141-residue stretch at 1–141 (VLTAEDRRLL…VADVLSEKYR (141 aa)) folds into the Globin domain. Positions 57 and 87 each coordinate heme b.

The protein belongs to the globin family. The deoxy-Hb is a heterotetramer of two alpha and two beta chains, but oxygenation results in dissociation to dimers. In terms of tissue distribution, red blood cells.

Its function is as follows. Involved in oxygen transport from the lung to the various peripheral tissues. The sequence is that of Hemoglobin subunit alpha-D (HBAD) from Erythrolamprus miliaris (South American water snake).